The sequence spans 256 residues: MIQSITSQGLVLYNRNFREDDKLVKIFTEQVGKCMFFVKHAGQSKLAPVIQPLVLARFLLRINDDGLSYIEDYHEVMTFPKINSDLFVMAYATYVAALADASLQDNQQDAPLFAFLQKTLELMEAGLDYQVLTNIFEIQILTRFGISLNFNECVFCHRVGQAFDFSFKYGACLCPEHYHEDERRCHLNPNIPYLLNQFQAIDFETLETISLKPGIKQELRQFMDQLYEEYVGIHLKSKKFIDSLADWGQLLKEEKK.

It belongs to the RecO family.

In terms of biological role, involved in DNA repair and RecF pathway recombination. This is DNA repair protein RecO from Streptococcus pneumoniae serotype 19F (strain G54).